The primary structure comprises 207 residues: Cyclic di-AMP synthase CdaS (207 aa).

A coiled-coil region spans residues 13–37; sequence AFKGKIQVYLEQILGDASLILKTLH. The DAC domain maps to 63-205; sequence SFYLQSYIEE…DGVLYPLISP (143 aa).

The protein belongs to the adenylate cyclase family. DacB/CdaS subfamily. In terms of assembly, forms dimers and probably also hexamers; the dimer may be active while the hexamer may not be active.

The enzyme catalyses 2 ATP = 3',3'-c-di-AMP + 2 diphosphate. In terms of biological role, one of 3 paralogous diadenylate cyclases (DAC) in this bacteria, catalyzing the condensation of 2 ATP molecules into cyclic di-AMP (c-di-AMP). Upon expression in E.coli leads to c-di-AMP synthesis. Overexpression of the hyperactive mutant (L44F) in the absence of c-di-AMP phosphodiesterase GdpP leads to growth defects in log phase (long curly cell filaments) that disappear upon sporulation; spore formation is normal, showing sporulation is insensitive to the excess c-di-AMP. In B.subtilis c-di-AMP is a second messenger that mediates growth, DNA repair and cell wall homeostasis; it is toxic when present in excess. In Bacillus subtilis (strain 168), this protein is Cyclic di-AMP synthase CdaS.